The primary structure comprises 327 residues: Dolichyl-phosphate beta-glucosyltransferase ALG5D (327 aa).

At 1–6 the chain is on the lumenal side; it reads MEKQLA. The helical transmembrane segment at 7–27 threads the bilayer; sequence ELSVYILIIFLILGFIMAILM. At 28–327 the chain is on the cytoplasmic side; the sequence is RFGDDTTLFD…NIWTIRDRKF (300 aa).

This sequence belongs to the glycosyltransferase 2 family.

The protein resides in the endoplasmic reticulum membrane. It catalyses the reaction a di-trans,poly-cis-dolichyl phosphate + UDP-alpha-D-glucose = a di-trans,poly-cis-dolichyl beta-D-glucosyl phosphate + UDP. It participates in protein modification; protein glycosylation. Its function is as follows. Dolichyl-phosphate beta-glucosyltransferase involved in the glycosylation of glycoproteins through the synthesis of dolichyl beta-D-glucosyl phosphate which serves as a sugar donor for transfer of three glucose residues to the Man-9-GlcNAc-2-PP-dolichol precursor to N-glycans. This is Dolichyl-phosphate beta-glucosyltransferase ALG5D from Trichomonas vaginalis (strain ATCC PRA-98 / G3).